A 108-amino-acid polypeptide reads, in one-letter code: DNA-directed RNA polymerase subunit omega (108 aa).

Residues 1 to 32 (MTNSQSDAALAAVPDRFDPSAGGPGAYDTPLG) form a disordered region.

This sequence belongs to the RNA polymerase subunit omega family. As to quaternary structure, the RNAP catalytic core consists of 2 alpha, 1 beta, 1 beta' and 1 omega subunit. When a sigma factor is associated with the core the holoenzyme is formed, which can initiate transcription.

The catalysed reaction is RNA(n) + a ribonucleoside 5'-triphosphate = RNA(n+1) + diphosphate. In terms of biological role, promotes RNA polymerase assembly. Latches the N- and C-terminal regions of the beta' subunit thereby facilitating its interaction with the beta and alpha subunits. This chain is DNA-directed RNA polymerase subunit omega, found in Mycobacterium avium (strain 104).